The chain runs to 162 residues: Phosphopantetheine adenylyltransferase (162 aa).

A substrate-binding site is contributed by threonine 9. ATP-binding positions include 9-10 (TF) and histidine 17. Substrate-binding residues include lysine 41, leucine 73, and arginine 87. ATP-binding positions include 88 to 90 (GLR), glutamate 98, and 123 to 129 (LSYISSS).

It belongs to the bacterial CoaD family. As to quaternary structure, homohexamer. It depends on Mg(2+) as a cofactor.

The protein resides in the cytoplasm. It catalyses the reaction (R)-4'-phosphopantetheine + ATP + H(+) = 3'-dephospho-CoA + diphosphate. It participates in cofactor biosynthesis; coenzyme A biosynthesis; CoA from (R)-pantothenate: step 4/5. In terms of biological role, reversibly transfers an adenylyl group from ATP to 4'-phosphopantetheine, yielding dephospho-CoA (dPCoA) and pyrophosphate. The polypeptide is Phosphopantetheine adenylyltransferase (Teredinibacter turnerae (strain ATCC 39867 / T7901)).